The sequence spans 546 residues: Zinc metalloproteinase nas-9 (546 aa).

Positions 1–14 (MIFLLFVVFPFVYA) are cleaved as a signal peptide. The propeptide occupies 15–300 (QLLPELLAGF…GGGGGGRVPR (286 aa)). The N-linked (GlcNAc...) asparagine glycan is linked to asparagine 248. The 200-residue stretch at 308–507 (SAVQKWDIWK…IRLLKKMYCR (200 aa)) folds into the Peptidase M12A domain. 5 cysteine pairs are disulfide-bonded: cysteine 347/cysteine 506, cysteine 372/cysteine 392, cysteine 510/cysteine 546, cysteine 517/cysteine 539, and cysteine 526/cysteine 543. A Zn(2+)-binding site is contributed by histidine 401. Residue glutamate 402 is part of the active site. Zn(2+)-binding residues include histidine 405 and histidine 411. One can recognise a ShKT domain in the interval 510–546 (CDDQNVHCGTWALHGYCKMKEQMKWMNENCKASCDKC).

Requires Zn(2+) as cofactor. Expressed in hypodermis, uterus and spermatheca.

The protein resides in the secreted. Its function is as follows. Metalloprotease. In Caenorhabditis elegans, this protein is Zinc metalloproteinase nas-9 (nas-9).